Here is a 159-residue protein sequence, read N- to C-terminus: NAD(P)H-quinone oxidoreductase subunit N (159 aa).

The protein belongs to the complex I NdhN subunit family. In terms of assembly, NDH-1 can be composed of about 15 different subunits; different subcomplexes with different compositions have been identified which probably have different functions.

The protein localises to the cell inner membrane. The catalysed reaction is a plastoquinone + NADH + (n+1) H(+)(in) = a plastoquinol + NAD(+) + n H(+)(out). The enzyme catalyses a plastoquinone + NADPH + (n+1) H(+)(in) = a plastoquinol + NADP(+) + n H(+)(out). In terms of biological role, NDH-1 shuttles electrons from an unknown electron donor, via FMN and iron-sulfur (Fe-S) centers, to quinones in the respiratory and/or the photosynthetic chain. The immediate electron acceptor for the enzyme in this species is believed to be plastoquinone. Couples the redox reaction to proton translocation, and thus conserves the redox energy in a proton gradient. Cyanobacterial NDH-1 also plays a role in inorganic carbon-concentration. In Gloeobacter violaceus (strain ATCC 29082 / PCC 7421), this protein is NAD(P)H-quinone oxidoreductase subunit N.